The sequence spans 378 residues: Erythronate-4-phosphate dehydrogenase (378 aa).

The substrate site is built by serine 45 and threonine 66. Aspartate 146 and threonine 175 together coordinate NAD(+). The active site involves arginine 208. Residue aspartate 232 coordinates NAD(+). Glutamate 237 is a catalytic residue. The active-site Proton donor is histidine 254. Glycine 257 is a binding site for NAD(+). Tyrosine 258 provides a ligand contact to substrate.

Belongs to the D-isomer specific 2-hydroxyacid dehydrogenase family. PdxB subfamily. Homodimer.

The protein resides in the cytoplasm. It catalyses the reaction 4-phospho-D-erythronate + NAD(+) = (R)-3-hydroxy-2-oxo-4-phosphooxybutanoate + NADH + H(+). The protein operates within cofactor biosynthesis; pyridoxine 5'-phosphate biosynthesis; pyridoxine 5'-phosphate from D-erythrose 4-phosphate: step 2/5. Functionally, catalyzes the oxidation of erythronate-4-phosphate to 3-hydroxy-2-oxo-4-phosphonooxybutanoate. The sequence is that of Erythronate-4-phosphate dehydrogenase from Escherichia coli O17:K52:H18 (strain UMN026 / ExPEC).